The primary structure comprises 711 residues: Probable cyclic nucleotide-gated ion channel 10 (711 aa).

Residues 1–81 (MAFSHDNRVR…QDSFLQNWNK (81 aa)) are Cytoplasmic-facing. Residues 82-102 (IFLFACVVALAIDPLFFYIPI) form a helical membrane-spanning segment. Residues 103–116 (VDSARHCLTLDSKL) are Extracellular-facing. Residues 117-137 (EIAASLLRTLIDAFYIIHIVF) form a helical membrane-spanning segment. Over 138–170 (QFRTAYIAPSSRVFGRGELVDDAKAIALKYLSS) the chain is Cytoplasmic. The chain crosses the membrane as a helical span at residues 171 to 191 (YFIIDLLSILPLPQIVVLAVI). Topologically, residues 192–204 (PSVNQPVSLLTKD) are extracellular. The chain crosses the membrane as a helical span at residues 205 to 225 (YLKFSIIAQYVPRILRMYPLY). Topologically, residues 226 to 243 (TEVTRTSGIVTETAWAGA) are cytoplasmic. Residues 244–264 (AWNLSLYMLASHVFGALWYLI) form a helical membrane-spanning segment. Residues 265–366 (SVEREDRCWQ…GQNLQTSKFV (102 aa)) are Extracellular-facing. The chain crosses the membrane as a helical span at residues 367–387 (GEIIFAISICISGLVLFALLI). Residues 388 to 711 (GNMQKYLEST…DFTANHTTDP (324 aa)) are Cytoplasmic-facing. Residues 473-603 (LFEI…TFRF) and Glu544 each bind a nucleoside 3',5'-cyclic phosphate. Residues 589-604 (FRRLHSKQLQHTFRFY) form a calmodulin-binding region. One can recognise an IQ domain in the interval 609–638 (RTWSVSFIQAAWRRYCRRKLAKSLRDEEDR). The segment at 689–711 (YTLPLLPQKPTEPDFTANHTTDP) is disordered.

Belongs to the cyclic nucleotide-gated cation channel (TC 1.A.1.5) family. Homotetramer or heterotetramer.

It is found in the cell membrane. Its function is as follows. Probable cyclic nucleotide-gated ion channel. This chain is Probable cyclic nucleotide-gated ion channel 10 (CNGC10), found in Arabidopsis thaliana (Mouse-ear cress).